Here is a 429-residue protein sequence, read N- to C-terminus: CBL-interacting serine/threonine-protein kinase 7 (429 aa).

The Protein kinase domain occupies 25-280 (YELGRRLGSG…IETVMKTNWF (256 aa)). ATP is bound by residues 31–39 (LGSGSFAKV) and K54. D149 (proton acceptor) is an active-site residue. Residues 167 to 195 (DFGLSALPEHLQNGLLHTACGTPAYTAPE) are activation loop. Phosphoserine is present on S171. Position 184 is a phosphothreonine (T184). Positions 302-326 (SSVNSITAFDLISLSSGLDLSGLFE) constitute an NAF domain. Residues 330–363 (KKERRFTAKVSGVEVEEKAKMIGEKLGYVVKKKM) are PPI.

Belongs to the protein kinase superfamily. CAMK Ser/Thr protein kinase family. SNF1 subfamily. Interacts with CBL1, CBL2 and CBL3. It depends on Mn(2+) as a cofactor. In terms of processing, autophosphorylated. As to expression, strongly expressed in leaves, but barely expressed in roots, stems or flowers.

It catalyses the reaction L-seryl-[protein] + ATP = O-phospho-L-seryl-[protein] + ADP + H(+). The catalysed reaction is L-threonyl-[protein] + ATP = O-phospho-L-threonyl-[protein] + ADP + H(+). Functionally, CIPK serine-threonine protein kinases interact with CBL proteins. Binding of a CBL protein to the regulatory NAF domain of CIPK protein lead to the activation of the kinase in a calcium-dependent manner. Phosphorylates the rice sucrose synthase (SuSy) in vitro in an allosteric manner. Involved in cold response. This is CBL-interacting serine/threonine-protein kinase 7 (CIPK7) from Arabidopsis thaliana (Mouse-ear cress).